The following is a 942-amino-acid chain: UvrABC system protein A (942 aa).

32–39 (GLSGSGKS) contributes to the ATP binding site. The segment at 251–278 (CPVCGFTVPELEPRLFSFNAPFGSCPTC) adopts a C4-type zinc-finger fold. 2 consecutive ABC transporter domains span residues 308-589 (WNPI…KKSI) and 609-937 (GNGR…HYLK). 641 to 648 (GVSGSGKS) contributes to the ATP binding site. A C4-type zinc finger spans residues 740–766 (CEACSGDGIIKIEMHFLPDVYVPCEVC).

It belongs to the ABC transporter superfamily. UvrA family. In terms of assembly, forms a heterotetramer with UvrB during the search for lesions.

It is found in the cytoplasm. Its function is as follows. The UvrABC repair system catalyzes the recognition and processing of DNA lesions. UvrA is an ATPase and a DNA-binding protein. A damage recognition complex composed of 2 UvrA and 2 UvrB subunits scans DNA for abnormalities. When the presence of a lesion has been verified by UvrB, the UvrA molecules dissociate. The sequence is that of UvrABC system protein A from Streptococcus pyogenes serotype M6 (strain ATCC BAA-946 / MGAS10394).